Consider the following 413-residue polypeptide: Elongation factor 1-alpha (413 aa).

GTP contacts are provided by residues 1–7 (HVDSGKS), 77–81 (DAPGH), and 139–142 (NKMD). The region spanning 1–228 (HVDSGKSTTT…DAILPPARPT (228 aa)) is the tr-type G domain. 2 positions are modified to 5-glutamyl glycerylphosphorylethanolamine: E287 and E360.

It belongs to the TRAFAC class translation factor GTPase superfamily. Classic translation factor GTPase family. EF-Tu/EF-1A subfamily.

It localises to the cytoplasm. Functionally, this protein promotes the GTP-dependent binding of aminoacyl-tRNA to the A-site of ribosomes during protein biosynthesis. The polypeptide is Elongation factor 1-alpha (Heliocheilus albipunctella (Millet head miner)).